Consider the following 239-residue polypeptide: Lytic polysaccharide monooxygenase-like protein X325 (239 aa).

The first 24 residues, 1–24, serve as a signal peptide directing secretion; sequence MVLPSSVSQWAALIALLCAGLANA. Cu(2+) is bound at residue H25. N41, N56, N79, N117, N150, and N197 each carry an N-linked (GlcNAc...) asparagine glycan. Intrachain disulfides connect C71-C176 and C141-C195. Residue S214 is the site of GPI-anchor amidated serine attachment. A propeptide spans 215–239 (removed in mature form); it reads AAAPKSSLMSVLPVYMVALLSWAMM.

Belongs to the X325 family. The cofactor is Cu(2+).

It localises to the cell membrane. Functionally, lytic polysaccharide monooxygenase-like protein that has diverged to biological functions other than polysaccharide degradation since it does not perform oxidative cleavage of polysaccharides. Acts as a cell surface-bound protein that functions in the copper-accumulation pathway. May also act as the major cell wall sensor that regulates MAP kinase-dependent hyphal anastomosis, the fusion of hyphal cells. The protein is Lytic polysaccharide monooxygenase-like protein X325 of Aspergillus fumigatus (strain ATCC MYA-4609 / CBS 101355 / FGSC A1100 / Af293) (Neosartorya fumigata).